The primary structure comprises 376 residues: N-acetyldiaminopimelate deacetylase (376 aa).

Asp69 is an active-site residue. The Proton acceptor role is filled by Glu128.

This sequence belongs to the peptidase M20A family. N-acetyldiaminopimelate deacetylase subfamily.

The enzyme catalyses N-acetyl-(2S,6S)-2,6-diaminopimelate + H2O = (2S,6S)-2,6-diaminopimelate + acetate. The protein operates within amino-acid biosynthesis; L-lysine biosynthesis via DAP pathway; LL-2,6-diaminopimelate from (S)-tetrahydrodipicolinate (acetylase route): step 3/3. Functionally, catalyzes the conversion of N-acetyl-diaminopimelate to diaminopimelate and acetate. The polypeptide is N-acetyldiaminopimelate deacetylase (Streptococcus pneumoniae (strain Taiwan19F-14)).